The sequence spans 234 residues: Kappa-casein (234 aa).

An N-terminal signal peptide occupies residues 1–21 (MMKSFLLVVNIVALTLPFLAA). 3 repeat units span residues 127–153 (LGKA…QPTV), 154–179 (SAGD…EEAR), and 180–207 (ESPE…PRES). A 3 X 27 AA tandem repeats region spans residues 127-207 (LGKATILSTD…AVPSEEPRES (81 aa)). Residues 143-234 (QTPVSAAQPT…STGPAIASMA (92 aa)) are disordered. Threonine 144 carries an O-linked (GalNAc...) threonine glycan. Over residues 144-171 (TPVSAAQPTVSAGDTPEVSSQFIDTPDT) the composition is skewed to polar residues. Threonine 158 carries the phosphothreonine modification. Residue serine 162 is modified to Phosphoserine; alternate. An O-linked (GalNAc...) serine; alternate glycan is attached at serine 162.

This sequence belongs to the kappa-casein family. In terms of tissue distribution, mammary gland specific. Secreted in milk.

The protein resides in the secreted. Functionally, kappa-casein stabilizes micelle formation, preventing casein precipitation in milk. The chain is Kappa-casein (CSN3) from Cavia porcellus (Guinea pig).